Reading from the N-terminus, the 340-residue chain is tRNA N6-adenosine threonylcarbamoyltransferase (340 aa).

Residues His-113 and His-117 each contribute to the Fe cation site. Residues Leu-135 to Gly-139, Asp-169, Gly-182, Asp-186, and Asn-274 each bind substrate. Asp-302 contributes to the Fe cation binding site.

This sequence belongs to the KAE1 / TsaD family. It depends on Fe(2+) as a cofactor.

It localises to the cytoplasm. The enzyme catalyses L-threonylcarbamoyladenylate + adenosine(37) in tRNA = N(6)-L-threonylcarbamoyladenosine(37) in tRNA + AMP + H(+). Required for the formation of a threonylcarbamoyl group on adenosine at position 37 (t(6)A37) in tRNAs that read codons beginning with adenine. Is involved in the transfer of the threonylcarbamoyl moiety of threonylcarbamoyl-AMP (TC-AMP) to the N6 group of A37, together with TsaE and TsaB. TsaD likely plays a direct catalytic role in this reaction. This chain is tRNA N6-adenosine threonylcarbamoyltransferase, found in Mycobacterium sp. (strain KMS).